The following is a 349-amino-acid chain: Thiamine thiazole synthase, chloroplastic (349 aa).

The transit peptide at 1–45 (MAAIASTLSLSSTKPQRLFDSSFHGSAISAAPISIGLKPRSFSVR) directs the protein to the chloroplast. Residues Ala94, 114–115 (EQ), Gly122, and Ala187 contribute to the substrate site. Residue Cys216 is modified to 2,3-didehydroalanine (Cys). Residues Asp218, His233, Met285, and 295–297 (RMG) contribute to the substrate site.

The protein belongs to the THI4 family. As to quaternary structure, homooctamer. Interacts with RBCX1 and RBCX1. Interacts with CPK33. It depends on Fe cation as a cofactor. During the catalytic reaction, a sulfide is transferred from Cys-216 to a reaction intermediate, generating a dehydroalanine residue. Not phosphorylated in vitro by CPK33. As to expression, expressed at high levels in chloroplast-containing parenchymatic cells of leaves, inflorescence shoots and flowers, and at lower levels in the vascular system. In young plants, detected in roots and shoots including cotyledons, leaves and hypocotyls. Also observed in apical meristematic regions, siliques and embryos. Low expression in roots, limited to the vascular tissue. Broadly expressed in roots, cotyledons, leaves, hypocotyls, inflorescences, siliques, and strongly in guard cells.

The protein localises to the plastid. The protein resides in the chloroplast. It is found in the mitochondrion. Its subcellular location is the cell membrane. The enzyme catalyses [ADP-thiazole synthase]-L-cysteine + glycine + NAD(+) = [ADP-thiazole synthase]-dehydroalanine + ADP-5-ethyl-4-methylthiazole-2-carboxylate + nicotinamide + 3 H2O + 2 H(+). Functionally, involved in biosynthesis of the thiamine precursor thiazole. Catalyzes the conversion of NAD and glycine to adenosine diphosphate 5-(2-hydroxyethyl)-4-methylthiazole-2-carboxylic acid (ADT), an adenylated thiazole intermediate. The reaction includes an iron-dependent sulfide transfer from a conserved cysteine residue of the protein to a thiazole intermediate. The enzyme can only undergo a single turnover, which suggests it is a suicide enzyme. May have additional roles in adaptation to various stress conditions and in DNA damage tolerance. Acts as a positive regulator for the abscisic acid-induced activation of slow type anion channels during stomatal closure by repressing CPK33 kinase activity. The protein is Thiamine thiazole synthase, chloroplastic of Arabidopsis thaliana (Mouse-ear cress).